Reading from the N-terminus, the 127-residue chain is Large ribosomal subunit protein bL17 (127 aa).

Belongs to the bacterial ribosomal protein bL17 family. As to quaternary structure, part of the 50S ribosomal subunit. Contacts protein L32.

In Enterococcus faecalis (strain ATCC 700802 / V583), this protein is Large ribosomal subunit protein bL17.